Here is a 340-residue protein sequence, read N- to C-terminus: Probable D,D-dipeptide transport system permease protein DdpB (340 aa).

Over 1-11 the chain is Periplasmic; the sequence is MTFWSILRQRC. The chain crosses the membrane as a helical span at residues 12–32; the sequence is WGLVLVVAGVCVITFIISHLI. Topologically, residues 33-104 are cytoplasmic; sequence PGDPARLLAG…IFFPATLELA (72 aa). Positions 97–327 constitute an ABC transmembrane type-1 domain; it reads FPATLELAFG…LVNLVVDLLY (231 aa). A helical transmembrane segment spans residues 105–125; it reads FGALLLALLIGIPLGILSAVW. At 126–135 the chain is on the periplasmic side; sequence RNRWLDHLVR. Residues 136–156 form a helical membrane-spanning segment; that stretch reads IMAITGISTPAFWLGLGVIVL. Over 157–199 the chain is Cytoplasmic; the sequence is FYGHLQILPGGGRLDDWLDPPTHVTGFYLLDALLEGNGEVFFN. Residues 200–220 traverse the membrane as a helical segment; that stretch reads ALQHLILPALTLAFVHLGIVA. Over 221–246 the chain is Periplasmic; that stretch reads RQIRSAMLEQLSEDYIRTARASGLPG. Residues 247 to 269 form a helical membrane-spanning segment; that stretch reads WYIVLCYALPNALIPSITVLGLA. The Cytoplasmic portion of the chain corresponds to 270 to 279; it reads LGDLLYGAVL. The helical transmembrane segment at 280 to 300 threads the bilayer; it reads TETVFAWPGMGAWVVTSIQAL. Position 301 (Asp-301) is a topological domain, periplasmic. Residues 302–322 form a helical membrane-spanning segment; that stretch reads FPAVMGFAVVVSFAYVLVNLV. Over 323–340 the chain is Cytoplasmic; the sequence is VDLLYLWIDPRIGRGGGE.

The protein belongs to the binding-protein-dependent transport system permease family. OppBC subfamily. The complex is composed of two ATP-binding proteins (DdpD and DdpF), two transmembrane proteins (DdpB and DdpC) and a solute-binding protein (DdpA).

It is found in the cell inner membrane. Part of the ABC transporter complex DdpABCDF, which is probably involved in D,D-dipeptide transport. Probably responsible for the translocation of the substrate across the membrane. The polypeptide is Probable D,D-dipeptide transport system permease protein DdpB (ddpB) (Escherichia coli (strain K12)).